The primary structure comprises 134 residues: Large ribosomal subunit protein uL18 (134 aa).

The protein belongs to the universal ribosomal protein uL18 family. As to quaternary structure, part of the 50S ribosomal subunit; part of the 5S rRNA/L5/L18/L25 subcomplex. Contacts the 5S and 23S rRNAs.

In terms of biological role, this is one of the proteins that bind and probably mediate the attachment of the 5S RNA into the large ribosomal subunit, where it forms part of the central protuberance. The polypeptide is Large ribosomal subunit protein uL18 (Corynebacterium glutamicum (strain ATCC 13032 / DSM 20300 / JCM 1318 / BCRC 11384 / CCUG 27702 / LMG 3730 / NBRC 12168 / NCIMB 10025 / NRRL B-2784 / 534)).